Here is a 71-residue protein sequence, read N- to C-terminus: Ranatuerin-2Va (71 aa).

The first 22 residues, 1 to 22, serve as a signal peptide directing secretion; the sequence is MFTLKKSFLLLFFLGTITLSLC. The propeptide occupies 23-43; it reads EQERGADEDDGVEMTEEEVKR. The cysteines at positions 66 and 71 are disulfide-linked.

As to expression, expressed by the skin glands.

It localises to the secreted. Functionally, antimicrobial peptide. The protein is Ranatuerin-2Va of Odorrana versabilis (Chinese bamboo leaf odorous frog).